A 324-amino-acid chain; its full sequence is FCS-Like Zinc finger 11 (324 aa).

An FLZ-type zinc finger spans residues 266–309; that stretch reads NFLGICNFCNKKLGGGDDIYMYREKSFCSEECRSEEMMIDEEDL.

It belongs to the FLZ family. Interacts with KIN10 and KIN11 via its FLZ-type zinc finger domain. Forms heterodimer with FLZ2 in vitro.

It is found in the cytoplasm. The protein resides in the nucleus. In terms of biological role, may act as an adapter to facilitate the interaction of SnRK1 complex with effector proteins, conferring tissue- and stimulus-type specific differences in the SnRK1 regulation pathway. The polypeptide is FCS-Like Zinc finger 11 (Arabidopsis thaliana (Mouse-ear cress)).